Reading from the N-terminus, the 153-residue chain is SsrA-binding protein (153 aa).

Residues 132-142 (ALKRKEAEREA) show a composition bias toward basic and acidic residues. A disordered region spans residues 132 to 153 (ALKRKEAEREAQSAMKRYAKGY).

Belongs to the SmpB family.

It is found in the cytoplasm. In terms of biological role, required for rescue of stalled ribosomes mediated by trans-translation. Binds to transfer-messenger RNA (tmRNA), required for stable association of tmRNA with ribosomes. tmRNA and SmpB together mimic tRNA shape, replacing the anticodon stem-loop with SmpB. tmRNA is encoded by the ssrA gene; the 2 termini fold to resemble tRNA(Ala) and it encodes a 'tag peptide', a short internal open reading frame. During trans-translation Ala-aminoacylated tmRNA acts like a tRNA, entering the A-site of stalled ribosomes, displacing the stalled mRNA. The ribosome then switches to translate the ORF on the tmRNA; the nascent peptide is terminated with the 'tag peptide' encoded by the tmRNA and targeted for degradation. The ribosome is freed to recommence translation, which seems to be the essential function of trans-translation. The sequence is that of SsrA-binding protein from Campylobacter hominis (strain ATCC BAA-381 / DSM 21671 / CCUG 45161 / LMG 19568 / NCTC 13146 / CH001A).